We begin with the raw amino-acid sequence, 102 residues long: A-type ATP synthase subunit F (102 aa).

Belongs to the V-ATPase F subunit family. As to quaternary structure, has multiple subunits with at least A(3), B(3), C, D, E, F, H, I and proteolipid K(x).

It is found in the cell membrane. Its function is as follows. Component of the A-type ATP synthase that produces ATP from ADP in the presence of a proton gradient across the membrane. The polypeptide is A-type ATP synthase subunit F (Thermococcus onnurineus (strain NA1)).